The primary structure comprises 99 residues: Co-chaperonin GroES (99 aa).

This sequence belongs to the GroES chaperonin family. Heptamer of 7 subunits arranged in a ring. Interacts with the chaperonin GroEL.

It is found in the cytoplasm. Its function is as follows. Together with the chaperonin GroEL, plays an essential role in assisting protein folding. The GroEL-GroES system forms a nano-cage that allows encapsulation of the non-native substrate proteins and provides a physical environment optimized to promote and accelerate protein folding. GroES binds to the apical surface of the GroEL ring, thereby capping the opening of the GroEL channel. This is Co-chaperonin GroES from Rhodococcus erythropolis (strain PR4 / NBRC 100887).